The primary structure comprises 221 residues: UPF0758 protein YicR (221 aa).

The region spanning alanine 99–isoleucine 221 is the MPN domain. Residues histidine 170, histidine 172, and aspartate 183 each contribute to the Zn(2+) site. Residues histidine 170 to aspartate 183 carry the JAMM motif motif.

Belongs to the UPF0758 family. YicR subfamily.

The polypeptide is UPF0758 protein YicR (Salmonella newport (strain SL254)).